A 939-amino-acid polypeptide reads, in one-letter code: Phosphoenolpyruvate carboxylase (939 aa).

Active-site residues include His-151 and Lys-593.

It belongs to the PEPCase type 1 family. Mg(2+) is required as a cofactor.

The enzyme catalyses oxaloacetate + phosphate = phosphoenolpyruvate + hydrogencarbonate. Functionally, forms oxaloacetate, a four-carbon dicarboxylic acid source for the tricarboxylic acid cycle. The chain is Phosphoenolpyruvate carboxylase from Gloeobacter violaceus (strain ATCC 29082 / PCC 7421).